A 300-amino-acid polypeptide reads, in one-letter code: Glutamyl-Q tRNA(Asp) synthetase (300 aa).

Residues 14–18 and Glu50 contribute to the L-glutamate site; that span reads RFAPT. The short motif at 17–27 is the 'HIGH' region element; it reads PTPSGFLHFGS. Zn(2+) is bound by residues Cys106, Cys108, Tyr120, and Cys124. The L-glutamate site is built by Tyr177 and Arg195. Positions 233 to 237 match the 'KMSKS' region motif; it reads KLGKS. Lys236 is a binding site for ATP.

This sequence belongs to the class-I aminoacyl-tRNA synthetase family. GluQ subfamily. Requires Zn(2+) as cofactor.

Functionally, catalyzes the tRNA-independent activation of glutamate in presence of ATP and the subsequent transfer of glutamate onto a tRNA(Asp). Glutamate is transferred on the 2-amino-5-(4,5-dihydroxy-2-cyclopenten-1-yl) moiety of the queuosine in the wobble position of the QUC anticodon. The chain is Glutamyl-Q tRNA(Asp) synthetase from Pseudomonas putida (strain ATCC 47054 / DSM 6125 / CFBP 8728 / NCIMB 11950 / KT2440).